The chain runs to 488 residues: Zinc finger protein 92 (488 aa).

In terms of domain architecture, KRAB spans 14–85 (VSFEDVSVYF…DDGMESAARS (72 aa)). 6 consecutive C2H2-type zinc fingers follow at residues 141 to 163 (YLCQ…RIIH), 169 to 191 (YECS…QRIH), 197 to 219 (YECG…QVIH), 225 to 247 (FVCR…TRIH), 253 to 275 (FECT…QRIH), and 281 to 303 (YICK…QLIH). The segment at 309–331 (FTCHEYGKAFRGLSGLSQHQRVH) adopts a C2H2-type 7; degenerate zinc-finger fold. The C2H2-type 8 zinc-finger motif lies at 337 to 359 (YECSECGRAFGRRANLFKHQVVH). The interval 387-408 (QQPQEAGEGSSAEPQPIDTNEK) is disordered. The C2H2-type 9 zinc finger occupies 410 to 432 (QVCERCGQVFENKLLLCRHLRIH). Residues 435-488 (EDDKKQKPVISSTSVLEDKSLLSQHLEAQPTEESDSEGSVVFVYAEKPHGPSSP) form a disordered region.

The protein belongs to the krueppel C2H2-type zinc-finger protein family. Highly expressed in pancreatic islets.

It localises to the nucleus. KRAB domain-containing zinc-finger protein that represses B1/Alu SINE transposable elements and modulates the transcription of nearby genes in a tissue-specific manner. It regulates glucose homeostasis and lipid metabolism by modulating the expression of the endocrine cell-defining transcription factor, MAFB, in pancreatic islets and, the fat metabolism regulator, ACACB, in adipose tissue and muscle. This is Zinc finger protein 92 (Zfp92) from Mus musculus (Mouse).